Consider the following 202-residue polypeptide: Adenosylcobalamin/alpha-ribazole phosphatase (202 aa).

His8 functions as the Tele-phosphohistidine intermediate in the catalytic mechanism. Catalysis depends on Glu81, which acts as the Proton donor/acceptor.

The protein belongs to the phosphoglycerate mutase family.

It catalyses the reaction adenosylcob(III)alamin 5'-phosphate + H2O = adenosylcob(III)alamin + phosphate. The catalysed reaction is alpha-ribazole 5'-phosphate + H2O = alpha-ribazole + phosphate. Its pathway is nucleoside biosynthesis; alpha-ribazole biosynthesis; alpha-ribazole from 5,6-dimethylbenzimidazole: step 2/2. Its function is as follows. Catalyzes the conversion of adenosylcobalamin 5'-phosphate to adenosylcobalamin (vitamin B12); involved in the assembly of the nucleotide loop of cobalamin. Also catalyzes the hydrolysis of the phospho group from alpha-ribazole 5'-phosphate to form alpha-ribazole. The protein is Adenosylcobalamin/alpha-ribazole phosphatase (cobC) of Salmonella typhi.